We begin with the raw amino-acid sequence, 426 residues long: L-ascorbate peroxidase T, chloroplastic (426 aa).

The active-site Proton acceptor is His112. His241 is a heme b binding site. Thr242 contributes to the K(+) binding site. Residues 245 to 269 (RARPDRSGWGKPETKYTKTGPGEAG) are disordered. Positions 246–260 (ARPDRSGWGKPETKY) are enriched in basic and acidic residues. Thr274 and Asp281 together coordinate K(+). Residues 397–417 (YFLNIIIAIGVLVLLSTLFGG) traverse the membrane as a helical segment.

This sequence belongs to the peroxidase family. Ascorbate peroxidase subfamily. It depends on heme b as a cofactor.

Its subcellular location is the plastid. It localises to the chloroplast thylakoid membrane. It carries out the reaction L-ascorbate + H2O2 = L-dehydroascorbate + 2 H2O. Functionally, plays a key role in hydrogen peroxide removal. This is L-ascorbate peroxidase T, chloroplastic (APXT) from Arabidopsis thaliana (Mouse-ear cress).